Consider the following 217-residue polypeptide: Small ribosomal subunit protein uS3 (217 aa).

The KH type-2 domain occupies 40 to 110 (IRELVNKSFT…EVYINIHEVR (71 aa)).

This sequence belongs to the universal ribosomal protein uS3 family. In terms of assembly, part of the 30S ribosomal subunit. Forms a tight complex with proteins S10 and S14.

Functionally, binds the lower part of the 30S subunit head. Binds mRNA in the 70S ribosome, positioning it for translation. This chain is Small ribosomal subunit protein uS3, found in Rickettsia bellii (strain OSU 85-389).